A 92-amino-acid chain; its full sequence is YcgL domain-containing protein SO_2575 (92 aa).

Residues 1-85 (MLCAVYKSSR…PQVNLLAEHR (85 aa)) form the YcgL domain.

This is YcgL domain-containing protein SO_2575 from Shewanella oneidensis (strain ATCC 700550 / JCM 31522 / CIP 106686 / LMG 19005 / NCIMB 14063 / MR-1).